We begin with the raw amino-acid sequence, 205 residues long: Polyamine-modulated factor 1 (205 aa).

Residues 1–30 (MAEASSANLGSGCEEKRHEGSSSESVPPGT) form a disordered region. Positions 141–193 (FLQQRDTLRRHVQKQEAENQQLADAVLAGRRQVEELQLQVQAQQQAWQALHRE) form a coiled coil.

In terms of assembly, component of the MIS12 complex composed of MIS12, DSN1, NSL1 and PMF1. Interacts with COPS7A. Interacts via its coiled-coil domain with the leucine-zipper domain of NFE2L2. The interaction with NFE2L2 is required for the transcriptional regulation of SSAT. In terms of tissue distribution, highest levels of expression in heart and skeletal muscle, with significant levels expressed in kidney and liver.

The protein resides in the nucleus. It localises to the chromosome. It is found in the centromere. Its subcellular location is the kinetochore. Its function is as follows. Part of the MIS12 complex which is required for normal chromosome alignment and segregation and kinetochore formation during mitosis. May act as a cotranscription partner of NFE2L2 involved in regulation of polyamine-induced transcription of SSAT. The sequence is that of Polyamine-modulated factor 1 from Homo sapiens (Human).